The sequence spans 139 residues: Peptide methionine sulfoxide reductase B5 (139 aa).

Position 2 is an N-acetylalanine (alanine 2). The region spanning glutamate 12–alanine 133 is the MsrB domain. Zn(2+) is bound by residues cysteine 51, cysteine 54, cysteine 97, and cysteine 100. A disulfide bridge links cysteine 69 with cysteine 122. Residue cysteine 122 is the Nucleophile of the active site.

The protein belongs to the MsrB Met sulfoxide reductase family. The cofactor is Zn(2+).

It localises to the cytoplasm. The protein resides in the cytosol. It carries out the reaction L-methionyl-[protein] + [thioredoxin]-disulfide + H2O = L-methionyl-(R)-S-oxide-[protein] + [thioredoxin]-dithiol. In terms of biological role, catalyzes the reduction of methionine sulfoxide (MetSO) to methionine in proteins. Plays a protective role against oxidative stress by restoring activity to proteins that have been inactivated by methionine oxidation. MSRB family specifically reduces the MetSO R-enantiomer. The sequence is that of Peptide methionine sulfoxide reductase B5 (MSRB5) from Arabidopsis thaliana (Mouse-ear cress).